The primary structure comprises 463 residues: Exodeoxyribonuclease 7 large subunit (463 aa).

The protein belongs to the XseA family. In terms of assembly, heterooligomer composed of large and small subunits.

Its subcellular location is the cytoplasm. It carries out the reaction Exonucleolytic cleavage in either 5'- to 3'- or 3'- to 5'-direction to yield nucleoside 5'-phosphates.. Bidirectionally degrades single-stranded DNA into large acid-insoluble oligonucleotides, which are then degraded further into small acid-soluble oligonucleotides. This is Exodeoxyribonuclease 7 large subunit from Klebsiella pneumoniae subsp. pneumoniae (strain ATCC 700721 / MGH 78578).